Reading from the N-terminus, the 201-residue chain is Potassium-transporting ATPase KdpC subunit (201 aa).

A helical transmembrane segment spans residues 12-34 (LLALTMITGLAYPLAVTGLATVL). The disordered stretch occupies residues 73–102 (TVAPDPADSSKTVSAPYNAANSGGSNLGPT). Positions 81–101 (SSKTVSAPYNAANSGGSNLGP) are enriched in polar residues.

The protein belongs to the KdpC family. In terms of assembly, the system is composed of three essential subunits: KdpA, KdpB and KdpC.

The protein localises to the cell inner membrane. In terms of biological role, part of the high-affinity ATP-driven potassium transport (or Kdp) system, which catalyzes the hydrolysis of ATP coupled with the electrogenic transport of potassium into the cytoplasm. This subunit acts as a catalytic chaperone that increases the ATP-binding affinity of the ATP-hydrolyzing subunit KdpB by the formation of a transient KdpB/KdpC/ATP ternary complex. The protein is Potassium-transporting ATPase KdpC subunit of Rhodopseudomonas palustris (strain ATCC BAA-98 / CGA009).